A 470-amino-acid chain; its full sequence is Alpha-galactosidase (470 aa).

A signal peptide spans 1 to 18 (MFSLLLLTSTALVETALG). A disulfide bridge connects residues Cys-42 and Cys-74. Asn-43 carries an N-linked (GlcNAc...) asparagine glycan. 2 residues coordinate substrate: Asp-72 and Asp-73. N-linked (GlcNAc...) asparagine glycosylation is present at Asn-82. Cys-121 and Cys-151 are oxidised to a cystine. Lys-147 contacts substrate. The Nucleophile role is filled by Asp-149. A glycan (N-linked (GlcNAc...) asparagine) is linked at Asn-175. Arg-205 provides a ligand contact to substrate. Asp-209 (proton donor) is an active-site residue. 2 disulfides stabilise this stretch: Cys-221–Cys-237 and Cys-223–Cys-230. Substrate is bound at residue Gln-251. N-linked (GlcNAc...) asparagine glycans are attached at residues Asn-270, Asn-388, Asn-413, Asn-422, Asn-435, and Asn-454.

It belongs to the glycosyl hydrolase 27 family. In terms of assembly, homotetramer.

It is found in the secreted. It catalyses the reaction Hydrolysis of terminal, non-reducing alpha-D-galactose residues in alpha-D-galactosides, including galactose oligosaccharides, galactomannans and galactolipids.. The polypeptide is Alpha-galactosidase (MEL) (Zygotorulaspora mrakii (Zygosaccharomyces mrakii)).